The sequence spans 358 residues: C-X-C chemokine receptor type 4-A (358 aa).

The interval 1–25 (MDGFSGGIDINIFDGNSTENGSGDF) is important for chemokine binding and signaling. At 1–44 (MDGFSGGIDINIFDGNSTENGSGDFEDFIEPCFMHENSDFNRIF) the chain is on the extracellular side. N-linked (GlcNAc...) asparagine glycans are attached at residues Asn-16 and Asn-20. Cystine bridges form between Cys-32–Cys-281 and Cys-113–Cys-190. Residues 45–67 (LPTIYSFIFLLGIIGNGLVVVVM) traverse the membrane as a helical segment. Topologically, residues 68–81 (GYQKKSRTMTDKYR) are cytoplasmic. The chain crosses the membrane as a helical span at residues 82-103 (LHLSVADLLFVFTLPFWSVDAA). The tract at residues 98–101 (WSVD) is chemokine binding. At 104 to 114 (IGWYFKEFLCK) the chain is on the extracellular side. Residues 115–134 (AVHVIYTVNLYSSVLILAFI) form a helical membrane-spanning segment. Residues 117 to 121 (HVIYT) form a chemokine binding region. Residues 135 to 158 (SLDRYLAIVHATNSQGSRKMLADK) are Cytoplasmic-facing. The tract at residues 139–151 (YLAIVHATNSQGS) is involved in dimerization; when bound to chemokine. Residues 159–178 (VVYAGVWLPALLLTVPDLVF) traverse the membrane as a helical segment. Residues 179–202 (ARVSDENGQFVCDRIYPIENRETW) are Extracellular-facing. Positions 190–194 (CDRIY) are chemokine binding, important for signaling. A helical membrane pass occupies residues 203 to 223 (TVGFRFLHITVGLILPGLIIL). The Cytoplasmic segment spans residues 224-248 (ICYCVIISKLSHSKGHQKRKALKTT). The chain crosses the membrane as a helical span at residues 249 to 268 (VILILAFFACWLPYYVCLTT). Over 269-289 (DTFMLLGLVKGDCIWENTLHM) the chain is Extracellular. A helical membrane pass occupies residues 290 to 309 (AISITEALAFFHCCLNPILY). Residues 310-358 (AFLGAKFKTSAQNAFTSVSRGSSLKILSKKRAGLSSVSTESESSSFHSS) lie on the Cytoplasmic side of the membrane. The disordered stretch occupies residues 338–358 (KKRAGLSSVSTESESSSFHSS). Over residues 344–358 (SSVSTESESSSFHSS) the composition is skewed to low complexity.

This sequence belongs to the G-protein coupled receptor 1 family. Monomer. Can form dimers. Post-translationally, sulfation is required for efficient binding of cxcl12/sdf-1alpha and promotes its dimerization. O- and N-glycosylated. As to expression, highly expressed in the embryonic nervous system including forebrain, hindbrain and sensory organs (including eye), and in neural crest cells. Also expressed in the dorsal lateral plate, the first site of definitive hematopoiesis in the embryo. Appears in migrating presumptive primordial germ cells (pPGCs) from stage 24. Expressed in the epidermis at stage 40. In the adult, highly expressed in the spleen with lower levels of expression in the liver and very low levels in kidney, heart, skin and brain.

It is found in the cell membrane. The protein localises to the cytoplasm. Its subcellular location is the nucleus. The protein resides in the early endosome. It localises to the late endosome. It is found in the lysosome. Receptor for the C-X-C chemokine cxcl12/sdf-1. Transduces a signal by increasing the intracellular level of calcium ions. Signaling with cxcl12/sdf-1 mediates the directional movement of mesodermal cells during gastrulation. May play a role in the migration of embryonic presumptive primordial germ cells (pPGCs). May also be involved in regulating the migration of hematopoietic stem cells into the larval liver. The protein is C-X-C chemokine receptor type 4-A (cxcr4-a) of Xenopus laevis (African clawed frog).